A 440-amino-acid chain; its full sequence is Gap junction gamma-2 protein (440 aa).

The Cytoplasmic portion of the chain corresponds to 1 to 21 (MTNMSWSFLTRLLEEIHNHST). A helical membrane pass occupies residues 22 to 42 (FVGKVWLTVLVVFRIVLTAVG). Topologically, residues 43–78 (GESIYSDEQSKFTCNTRQPGCDNVCYDAFAPLSHVR) are extracellular. Residues 79–99 (FWVFQIVVISTPSVMYLGYAV) form a helical membrane-spanning segment. At 100–223 (HRLARASEQE…AQLVVRAAFE (124 aa)) the chain is on the cytoplasmic side. The segment at 108–199 (QERRRALRRR…TPGPAGQHDG (92 aa)) is disordered. Positions 112-124 (RALRRRPGTRRLP) are enriched in basic residues. Positions 136-149 (PDTTDLGEAEPILA) are enriched in low complexity. Over residues 150–173 (LEEDEDEEPGAPEGPGEDTEEERA) the composition is skewed to acidic residues. A helical membrane pass occupies residues 224 to 244 (VAFLVGQYLLYGFEVPPFFAC). Over 245–264 (SRQPCPHVVDCFVSRPTEKT) the chain is Extracellular. A helical membrane pass occupies residues 265 to 285 (VFLLVMYVVSCLCLLLNLCEM). Topologically, residues 286 to 440 (AHLGLGSAQD…SRDGKATVWI (155 aa)) are cytoplasmic. A disordered region spans residues 369 to 440 (DRDSPPCAGL…SRDGKATVWI (72 aa)). Position 372 is a phosphoserine (serine 372). Positions 388-401 (VGGLASGTGSATSG) are enriched in low complexity.

Belongs to the connexin family. Gamma-type subfamily. A connexon is composed of a hexamer of connexins. Interacts with TJP1. Mainly expressed by oligodendrocytes in the central nervous system (at protein level).

The protein localises to the cell membrane. The protein resides in the cell junction. It localises to the gap junction. Functionally, one gap junction consists of a cluster of closely packed pairs of transmembrane channels, the connexons, through which materials of low MW diffuse from one cell to a neighboring cell. May play a role in myelination in central and peripheral nervous systems. This is Gap junction gamma-2 protein (Gjc2) from Mus musculus (Mouse).